A 493-amino-acid polypeptide reads, in one-letter code: Cytochrome P450 2E1 (493 aa).

298 to 303 is a substrate binding site; it reads FAGTET. Heme is bound at residue Cys-437.

This sequence belongs to the cytochrome P450 family. As to quaternary structure, interacts with chaperones HSP70 and HSP90; this interaction is required for initial targeting to mitochondria. The cofactor is heme.

It is found in the endoplasmic reticulum membrane. It localises to the microsome membrane. The protein localises to the mitochondrion inner membrane. The enzyme catalyses an organic molecule + reduced [NADPH--hemoprotein reductase] + O2 = an alcohol + oxidized [NADPH--hemoprotein reductase] + H2O + H(+). It catalyses the reaction (5Z,8Z,11Z)-eicosatrienoate + reduced [NADPH--hemoprotein reductase] + O2 = 19-hydroxy-(5Z,8Z,11Z)-eicosatrienoate + oxidized [NADPH--hemoprotein reductase] + H2O + H(+). It carries out the reaction (5Z,8Z,11Z,14Z,17Z)-eicosapentaenoate + reduced [NADPH--hemoprotein reductase] + O2 = 19-hydroxy-(5Z,8Z,11Z,14Z,17Z)-eicosapentaenoate + oxidized [NADPH--hemoprotein reductase] + H2O + H(+). The catalysed reaction is (4Z,7Z,10Z,13Z,16Z,19Z)-docosahexaenoate + reduced [NADPH--hemoprotein reductase] + O2 = 21-hydroxy-(4Z,7Z,10Z,13Z,16Z,19Z)-docosahexaenoate + oxidized [NADPH--hemoprotein reductase] + H2O + H(+). The enzyme catalyses dodecanoate + reduced [NADPH--hemoprotein reductase] + O2 = 11-hydroxydodecanoate + oxidized [NADPH--hemoprotein reductase] + H2O + H(+). It catalyses the reaction tetradecanoate + reduced [NADPH--hemoprotein reductase] + O2 = 13-hydroxytetradecanoate + oxidized [NADPH--hemoprotein reductase] + H2O + H(+). It carries out the reaction 4-nitrophenol + NADPH + O2 + H(+) = 4-nitrocatechol + NADP(+) + H2O. The protein operates within lipid metabolism; fatty acid metabolism. Its activity is regulated as follows. The omega-1 hydroxylase activity is stimulated by cytochrome b5. Its function is as follows. A cytochrome P450 monooxygenase involved in the metabolism of fatty acids. Mechanistically, uses molecular oxygen inserting one oxygen atom into a substrate, and reducing the second into a water molecule, with two electrons provided by NADPH via cytochrome P450 reductase (NADPH--hemoprotein reductase). Catalyzes the hydroxylation of carbon-hydrogen bonds. Hydroxylates fatty acids specifically at the omega-1 position displaying the highest catalytic activity for saturated fatty acids. May be involved in the oxidative metabolism of xenobiotics. This is Cytochrome P450 2E1 (CYP2E1) from Macaca mulatta (Rhesus macaque).